We begin with the raw amino-acid sequence, 453 residues long: Sialic acid-binding Ig-like lectin 6 (453 aa).

An N-terminal signal peptide occupies residues 1-26; sequence MQGAQEASASEMLPLLLPLLWAGALA. The Extracellular segment spans residues 27-347; it reads QERRFQLEGP…WKPEGRAGGV (321 aa). The region spanning 28–123 is the Ig-like V-type domain; the sequence is ERRFQLEGPE…RDNAAYFFRL (96 aa). 3 disulfide bridges follow: Cys46–Cys172, Cys51–Cys104, and Cys166–Cys215. N-linked (GlcNAc...) asparagine glycosylation is present at Asn103. Arg122 is an N-acetylneuraminate binding site. The Ig-like C2-type 1 domain maps to 148 to 231; it reads PNISIPGTLE…AGVTMERTIQ (84 aa). 2 N-linked (GlcNAc...) asparagine glycosylation sites follow: Asn149 and Asn163. Asn233 carries N-linked (GlcNAc...) asparagine glycosylation. The 96-residue stretch at 238 to 333 folds into the Ig-like C2-type 2 domain; sequence PQKVAISIFQ…PLGSLQISLS (96 aa). A disulfide bridge links Cys274 with Cys319. Residues 348–368 traverse the membrane as a helical segment; that stretch reads LGAVWGASITTLVFLCVCFIF. Over 369–453 the chain is Cytoplasmic; it reads RVKTRRKKAA…TEYSEIKIHK (85 aa). An ITIM motif motif is present at residues 424 to 429; sequence LHYAVL. Positions 444–449 match the SLAM-like motif motif; that stretch reads TEYSEI.

This sequence belongs to the immunoglobulin superfamily. SIGLEC (sialic acid binding Ig-like lectin) family. As to quaternary structure, interacts with LEP. Expressed at high levels in placenta (cyto- and syncytiotrophoblastic cells) and at lower levels in spleen, peripheral blood leukocytes (predominantly B-cells) and small intestine.

The protein resides in the cell membrane. Its subcellular location is the secreted. Functionally, putative adhesion molecule that mediates sialic-acid dependent binding to cells. Binds to alpha-2,6-linked sialic acid. The sialic acid recognition site may be masked by cis interactions with sialic acids on the same cell surface. The protein is Sialic acid-binding Ig-like lectin 6 (SIGLEC6) of Homo sapiens (Human).